The following is a 410-amino-acid chain: Arginine deiminase (410 aa).

C400 functions as the Amidino-cysteine intermediate in the catalytic mechanism.

Belongs to the arginine deiminase family.

The protein localises to the cytoplasm. It carries out the reaction L-arginine + H2O = L-citrulline + NH4(+). The protein operates within amino-acid degradation; L-arginine degradation via ADI pathway; carbamoyl phosphate from L-arginine: step 1/2. The polypeptide is Arginine deiminase (Bacillus cereus (strain G9842)).